A 155-amino-acid polypeptide reads, in one-letter code: Prespore-specific protein E (155 aa).

A signal peptide spans 1 to 20 (MRFISIFLIIVALCVSSSWA). N-linked (GlcNAc...) asparagine glycosylation is found at Asn22, Asn82, Asn85, and Asn102. O-linked (GlcNAc) serine glycosylation occurs at Ser105. Residue Asn133 is the site of GPI-like-anchor amidated asparagine attachment. Residues 134–155 (SADKVAVGIAIIFGALISLLAL) constitute a propeptide, removed in mature form.

Post-translationally, the GPI-like-anchor contains a phosphoceramide group, rather than a phosphatidyl group.

It localises to the cell membrane. This is Prespore-specific protein E (pspE) from Dictyostelium discoideum (Social amoeba).